A 610-amino-acid chain; its full sequence is UvrABC system protein C (610 aa).

Positions 16–94 constitute a GIY-YIG domain; sequence SQPGVYRMYD…IKLYQPRYNV (79 aa). The 36-residue stretch at 204–239 folds into the UVR domain; sequence DQVLTQLIARMEKASQDLAFEEAARIRDQIQAVRRV.

Belongs to the UvrC family. As to quaternary structure, interacts with UvrB in an incision complex.

Its subcellular location is the cytoplasm. Its function is as follows. The UvrABC repair system catalyzes the recognition and processing of DNA lesions. UvrC both incises the 5' and 3' sides of the lesion. The N-terminal half is responsible for the 3' incision and the C-terminal half is responsible for the 5' incision. The chain is UvrABC system protein C from Salmonella dublin (strain CT_02021853).